The chain runs to 148 residues: Large ribosomal subunit protein bL9 (148 aa).

Belongs to the bacterial ribosomal protein bL9 family.

In terms of biological role, binds to the 23S rRNA. The protein is Large ribosomal subunit protein bL9 of Hahella chejuensis (strain KCTC 2396).